The sequence spans 140 residues: ATP synthase epsilon chain (140 aa).

Belongs to the ATPase epsilon chain family. F-type ATPases have 2 components, CF(1) - the catalytic core - and CF(0) - the membrane proton channel. CF(1) has five subunits: alpha(3), beta(3), gamma(1), delta(1), epsilon(1). CF(0) has three main subunits: a, b and c.

It localises to the cell inner membrane. Its function is as follows. Produces ATP from ADP in the presence of a proton gradient across the membrane. This is ATP synthase epsilon chain from Janthinobacterium sp. (strain Marseille) (Minibacterium massiliensis).